The chain runs to 351 residues: Phospho-N-acetylmuramoyl-pentapeptide-transferase (351 aa).

A run of 10 helical transmembrane segments spans residues 17–37, 63–83, 85–105, 124–144, 158–178, 190–210, 230–250, 254–274, 279–299, and 328–348; these read TAYA…FIIL, IPTM…FFWI, FWNI…CLGF, FKIY…YYFG, SLKL…LISA, GLAI…AYLA, LVVF…FNAY, IMMG…TALI, ILFA…IIQV, and QVVI…LSTL.

Belongs to the glycosyltransferase 4 family. MraY subfamily. Mg(2+) serves as cofactor.

Its subcellular location is the cell inner membrane. The enzyme catalyses UDP-N-acetyl-alpha-D-muramoyl-L-alanyl-gamma-D-glutamyl-meso-2,6-diaminopimeloyl-D-alanyl-D-alanine + di-trans,octa-cis-undecaprenyl phosphate = di-trans,octa-cis-undecaprenyl diphospho-N-acetyl-alpha-D-muramoyl-L-alanyl-D-glutamyl-meso-2,6-diaminopimeloyl-D-alanyl-D-alanine + UMP. The protein operates within cell wall biogenesis; peptidoglycan biosynthesis. In terms of biological role, catalyzes the initial step of the lipid cycle reactions in the biosynthesis of the cell wall peptidoglycan: transfers peptidoglycan precursor phospho-MurNAc-pentapeptide from UDP-MurNAc-pentapeptide onto the lipid carrier undecaprenyl phosphate, yielding undecaprenyl-pyrophosphoryl-MurNAc-pentapeptide, known as lipid I. This chain is Phospho-N-acetylmuramoyl-pentapeptide-transferase, found in Borrelia turicatae (strain 91E135).